We begin with the raw amino-acid sequence, 149 residues long: uncharacterized protein (149 aa).

This is an uncharacterized protein from Caenorhabditis elegans.